The following is a 388-amino-acid chain: Succinate--CoA ligase [ADP-forming] subunit beta (388 aa).

Residues 9–244 (KQLFARYGLP…QSQEDPREAQ (236 aa)) form the ATP-grasp domain. ATP-binding positions include Lys46, 53-55 (GRG), Glu99, Thr102, and Glu107. Positions 199 and 213 each coordinate Mg(2+). Residues Asn264 and 321-323 (GIV) each bind substrate.

The protein belongs to the succinate/malate CoA ligase beta subunit family. As to quaternary structure, heterotetramer of two alpha and two beta subunits. It depends on Mg(2+) as a cofactor.

The catalysed reaction is succinate + ATP + CoA = succinyl-CoA + ADP + phosphate. The enzyme catalyses GTP + succinate + CoA = succinyl-CoA + GDP + phosphate. Its pathway is carbohydrate metabolism; tricarboxylic acid cycle; succinate from succinyl-CoA (ligase route): step 1/1. In terms of biological role, succinyl-CoA synthetase functions in the citric acid cycle (TCA), coupling the hydrolysis of succinyl-CoA to the synthesis of either ATP or GTP and thus represents the only step of substrate-level phosphorylation in the TCA. The beta subunit provides nucleotide specificity of the enzyme and binds the substrate succinate, while the binding sites for coenzyme A and phosphate are found in the alpha subunit. The polypeptide is Succinate--CoA ligase [ADP-forming] subunit beta (Escherichia coli O8 (strain IAI1)).